The following is a 1643-amino-acid chain: DNA-directed RNA polymerase subunit beta' (1643 aa).

Zn(2+) is bound by residues C64, C66, C79, and C82. The Mg(2+) site is built by D684, D686, and D688. Zn(2+)-binding residues include C1046, C1239, C1246, and C1249.

It belongs to the RNA polymerase beta' chain family. The RNAP catalytic core consists of 2 alpha, 1 beta, 1 beta' and 1 omega subunit. When a sigma factor is associated with the core the holoenzyme is formed, which can initiate transcription. It depends on Mg(2+) as a cofactor. The cofactor is Zn(2+).

The catalysed reaction is RNA(n) + a ribonucleoside 5'-triphosphate = RNA(n+1) + diphosphate. Functionally, DNA-dependent RNA polymerase catalyzes the transcription of DNA into RNA using the four ribonucleoside triphosphates as substrates. The polypeptide is DNA-directed RNA polymerase subunit beta' (Petrotoga mobilis (strain DSM 10674 / SJ95)).